A 325-amino-acid polypeptide reads, in one-letter code: Melanocortin receptor 5 (325 aa).

At 1–37 the chain is on the extracellular side; that stretch reads MNSSSTLTVLNLTLNASEDGILGSNVKNKSLACEEMG. 4 N-linked (GlcNAc...) asparagine glycosylation sites follow: Asn2, Asn11, Asn15, and Asn28. Residues 38–61 form a helical membrane-spanning segment; it reads IAVEVFLTLGLVSLLENILVIGAI. Residues 62–73 lie on the Cytoplasmic side of the membrane; that stretch reads VKNKNLHSPMYF. A helical membrane pass occupies residues 74 to 97; the sequence is FVGSLAVADMLVSMSNAWETVTIY. The Extracellular portion of the chain corresponds to 98–114; the sequence is LLNNKHLVIADTFVRHI. Residues 115–138 form a helical membrane-spanning segment; sequence DNVFDSMICISVVASMCSLLAIAV. Over 139-155 the chain is Cytoplasmic; sequence DRYITIFYALRYHHIMT. The chain crosses the membrane as a helical span at residues 156–179; the sequence is ARRSGVIIACIWTFCISCGIVFII. Over 180 to 186 the chain is Extracellular; that stretch reads YYESKYV. The helical transmembrane segment at 187–211 threads the bilayer; sequence IICLISMFFTMLFFMVSLYIHMFLL. Residues 212-239 lie on the Cytoplasmic side of the membrane; the sequence is ARNHVKRIAASPRYNSVRQRTSMKGAIT. A helical transmembrane segment spans residues 240 to 265; it reads LTMLLGIFIVCWSPFFLHLILMISCP. At 266-273 the chain is on the extracellular side; it reads QNVYCSCF. The chain crosses the membrane as a helical span at residues 274–297; it reads MSYFNMYLILIMCNSVIDPLIYAL. At 298–325 the chain is on the cytoplasmic side; the sequence is RSQEMRRTFKEIVCCHGFRRPCRLLGGY. Residues Cys311 and Cys312 are each lipidated (S-palmitoyl cysteine).

Belongs to the G-protein coupled receptor 1 family. In terms of tissue distribution, skin, adrenal gland, skeletal muscle, bone marrow, spleen, thymus, gonads, uterus and brain.

The protein resides in the cell membrane. Receptor for MSH (alpha, beta and gamma) and ACTH. The activity of this receptor is mediated by G proteins which activate adenylate cyclase. This receptor is a possible mediator of the immunomodulation properties of melanocortins. In Mus musculus (Mouse), this protein is Melanocortin receptor 5 (Mc5r).